We begin with the raw amino-acid sequence, 65 residues long: Conotoxin VnMLCL-031 (65 aa).

A signal peptide spans 1-19 (MLCLPXFIILLLLASPAAP). Positions 20 to 43 (NPLQTRXQSNLIRAGPEDANIKTX) are excised as a propeptide. At Ile-64 the chain carries Isoleucine amide.

This sequence belongs to the conotoxin T superfamily. In terms of tissue distribution, expressed by the venom duct.

The protein localises to the secreted. The chain is Conotoxin VnMLCL-031 from Conus ventricosus (Mediterranean cone).